The chain runs to 608 residues: Nuclear protein localization protein 4 homolog (608 aa).

A2 carries the N-acetylalanine modification. Residue K179 is modified to N6-acetyllysine. Positions 226 to 363 constitute an MPN domain; sequence IMFENHTVAD…ICRLSPDGHF (138 aa). The RanBP2-type zinc-finger motif lies at 580 to 608; that stretch reads TSAMWACQHCTFMNQPGTGHCEMCSLPRT.

Belongs to the NPL4 family. In terms of assembly, heterodimer with UFD1. The heterodimer binds ubiquitinated proteins. The heterodimer binds to VCP and inhibits Golgi membrane fusion. Interacts with ZFAND2B; probably through VCP.

It localises to the cytoplasm. The protein localises to the cytosol. Its subcellular location is the endoplasmic reticulum. The protein resides in the nucleus. It functions in the pathway protein degradation; proteasomal ubiquitin-dependent pathway. In terms of biological role, the ternary complex containing UFD1, VCP and NPLOC4 binds ubiquitinated proteins and is necessary for the export of misfolded proteins from the ER to the cytoplasm, where they are degraded by the proteasome. The NPLOC4-UFD1-VCP complex regulates spindle disassembly at the end of mitosis and is necessary for the formation of a closed nuclear envelope. Acts as a negative regulator of type I interferon production via the complex formed with VCP and UFD1, which binds to RIGI and recruits RNF125 to promote ubiquitination and degradation of RIGI. The chain is Nuclear protein localization protein 4 homolog (Nploc4) from Rattus norvegicus (Rat).